The primary structure comprises 287 residues: Putative ankyrin repeat protein R791 (287 aa).

7 ANK repeats span residues 40 to 71 (HNFNVLHEVIKRGYVHILKYVDELENLGPLVF), 76 to 105 (NVHDKLKLACNHDQLPIVKYLVETNSNIET), 107 to 134 (NDDVIITASFYGRTNIVEYFIKKDIDNK), 135 to 164 (TIFEALKNACDNGHLETMILLINNGVDIKA), 165 to 194 (KDNFIIKQAISKGHLNIVKYLVENGATIDI), 196 to 224 (DDTYIINSAQKGYYKMVEYLVYRGADYRT), and 225 to 254 (VDDLPIRCALMGGHLDVVKYLQSLGADIEA).

The polypeptide is Putative ankyrin repeat protein R791 (Acanthamoeba polyphaga (Amoeba)).